The primary structure comprises 169 residues: Cell division inhibitor SulA (169 aa).

The ftsZ binding stretch occupies residues 106 to 112 (ALRTGNY). Residues 162 to 169 (KIHSNLYH) form a lon protease binding region.

It belongs to the SulA family. Interacts with FtsZ. In terms of processing, is rapidly cleaved and degraded by the Lon protease once DNA damage is repaired.

Component of the SOS system and an inhibitor of cell division. Accumulation of SulA causes rapid cessation of cell division and the appearance of long, non-septate filaments. In the presence of GTP, binds a polymerization-competent form of FtsZ in a 1:1 ratio, thus inhibiting FtsZ polymerization and therefore preventing it from participating in the assembly of the Z ring. This mechanism prevents the premature segregation of damaged DNA to daughter cells during cell division. The chain is Cell division inhibitor SulA from Escherichia fergusonii (strain ATCC 35469 / DSM 13698 / CCUG 18766 / IAM 14443 / JCM 21226 / LMG 7866 / NBRC 102419 / NCTC 12128 / CDC 0568-73).